The sequence spans 295 residues: Pyridoxal 5'-phosphate synthase subunit PdxS (295 aa).

Asp-25 is a D-ribose 5-phosphate binding site. Catalysis depends on Lys-82, which acts as the Schiff-base intermediate with D-ribose 5-phosphate. Gly-154 serves as a coordination point for D-ribose 5-phosphate. Arg-166 serves as a coordination point for D-glyceraldehyde 3-phosphate. D-ribose 5-phosphate-binding positions include Gly-215 and 236–237; that span reads GS.

Belongs to the PdxS/SNZ family. In the presence of PdxT, forms a dodecamer of heterodimers.

The catalysed reaction is aldehydo-D-ribose 5-phosphate + D-glyceraldehyde 3-phosphate + L-glutamine = pyridoxal 5'-phosphate + L-glutamate + phosphate + 3 H2O + H(+). It participates in cofactor biosynthesis; pyridoxal 5'-phosphate biosynthesis. In terms of biological role, catalyzes the formation of pyridoxal 5'-phosphate from ribose 5-phosphate (RBP), glyceraldehyde 3-phosphate (G3P) and ammonia. The ammonia is provided by the PdxT subunit. Can also use ribulose 5-phosphate and dihydroxyacetone phosphate as substrates, resulting from enzyme-catalyzed isomerization of RBP and G3P, respectively. In Pasteurella multocida (strain Pm70), this protein is Pyridoxal 5'-phosphate synthase subunit PdxS.